Here is a 727-residue protein sequence, read N- to C-terminus: Pre-B-cell leukemia transcription factor-interacting protein 1 (727 aa).

A compositionally biased stretch (polar residues) spans 1-10; the sequence is MASCPDSDNS. The disordered stretch occupies residues 1–135; it reads MASCPDSDNS…SPHRSLPSSP (135 aa). Residues 39-53 are compositionally biased toward low complexity; sequence RAPQSPSRAAAEESA. Residue serine 43 is modified to Phosphoserine. A compositionally biased stretch (polar residues) spans 61–70; the sequence is TVSQNESSKS. Serine 130, serine 134, serine 147, serine 148, and serine 149 each carry phosphoserine. Position 153 is a phosphothreonine (threonine 153). 2 coiled-coil regions span residues 269 to 353 and 380 to 421; these read QNMA…QGAD and SPGF…SLKE. The Nuclear localization signal signature appears at 488-506; the sequence is WKTEHWKHKKEASGREKSW. Disordered regions lie at residues 491-568 and 701-727; these read EHWK…AKDR and KRSG…HRQG. Composition is skewed to basic and acidic residues over residues 498 to 544, 551 to 568, and 716 to 727; these read EASG…EPPR, PSGE…AKDR, and GPREEHSPHRQG. The Nuclear localization signal signature appears at 696 to 719; sequence DKALKKRSGKKDKHLQNRVVGPRE.

Interacts with ESR1, PBX1, PBX2 and PBX3. Interacts with TEX11.

It is found in the cytoplasm. Its subcellular location is the cytoskeleton. The protein localises to the nucleus. In terms of biological role, regulator of pre-B-cell leukemia transcription factors (BPXs) function. Inhibits the binding of PBX1-HOX complex to DNA and blocks the transcriptional activity of E2A-PBX1. Tethers estrogen receptor-alpha (ESR1) to microtubules and allows them to influence estrogen receptors-alpha signaling. This is Pre-B-cell leukemia transcription factor-interacting protein 1 (PBXIP1) from Bos taurus (Bovine).